Reading from the N-terminus, the 274-residue chain is Coiled-coil domain-containing protein 28A (274 aa).

The tract at residues 121–166 is disordered; sequence VSKSTGFSNPASQSTSQRPKLKRVMKEKTKPQGGEGKGAQSTPIQH. Over residues 122-138 the composition is skewed to polar residues; sequence SKSTGFSNPASQSTSQR. A coiled-coil region spans residues 234 to 263; sequence KRKTASDSNLDRLLSDLEELNSSIQKLHLA.

This Homo sapiens (Human) protein is Coiled-coil domain-containing protein 28A (CCDC28A).